A 37-amino-acid polypeptide reads, in one-letter code: Large ribosomal subunit protein bL36c (37 aa).

This sequence belongs to the bacterial ribosomal protein bL36 family.

The protein localises to the plastid. Its subcellular location is the chloroplast. The protein is Large ribosomal subunit protein bL36c of Acorus calamus (Sweet flag).